The sequence spans 191 residues: Surfactant protein C (191 aa).

The propeptide occupies Met-1–Arg-23. 2 S-palmitoyl cysteine lipidation sites follow: Cys-28 and Cys-29. Positions His-59 to Ile-191 are excised as a propeptide. The BRICHOS domain occupies Phe-94–Ile-191. A disulfide bridge connects residues Cys-121 and Cys-183.

The protein resides in the secreted. It localises to the extracellular space. Its subcellular location is the surface film. Its function is as follows. Pulmonary surfactant associated proteins promote alveolar stability by lowering the surface tension at the air-liquid interface in the peripheral air spaces. The polypeptide is Surfactant protein C (SFTPC) (Macaca mulatta (Rhesus macaque)).